An 85-amino-acid polypeptide reads, in one-letter code: MCVSRLVLLFGLLLCVGAQLSNAQHWSHGWYPGGKRELDSFGTSEISEEIKLCEAGECSYLRPQRRNVLRNIILDALARELQKRK.

The N-terminal stretch at 1–23 (MCVSRLVLLFGLLLCVGAQLSNA) is a signal peptide. A Pyrrolidone carboxylic acid modification is found at Gln-24. The residue at position 33 (Gly-33) is a Glycine amide.

This sequence belongs to the GnRH family.

The protein resides in the secreted. Its function is as follows. Stimulates the secretion of gonadotropins. The polypeptide is Progonadoliberin-2 (gnrh2) (Morone saxatilis (Striped bass)).